The primary structure comprises 343 residues: MIKLSNITKVFHQGTRIIQALNNVSLHVPAGQIYGVIGASGAGKSTLIRCVNLLERPTEGSVLVDGQELTTLSESELTKARRQIGMIFQHFNLLSSRTVFGNVALPLELDNTPKDEIKRRVTELLSLVGLGDKHDSYPSNLSGGQKQRVAIARALASNPKVLLCDEATSALDPATTRSILELLKDINRRLGLTILLITHEMDVVKRICDCVAVISNGELIEQDTVSEVFSHPKTPLAQKFIQSTLHLDIPEDYQERLQAEPFTDCVPMLRLEFTGQSVDAPLLSETARRFNVNNNIISAQMDYAGGVKFGIMLTEMHGTQQDTQAAIAWLQEHHVKVEVLGYV.

The region spanning 2–241 is the ABC transporter domain; it reads IKLSNITKVF…PKTPLAQKFI (240 aa). 38–45 contributes to the ATP binding site; it reads GASGAGKS.

The protein belongs to the ABC transporter superfamily. Methionine importer (TC 3.A.1.24) family. As to quaternary structure, the complex is composed of two ATP-binding proteins (MetN), two transmembrane proteins (MetI) and a solute-binding protein (MetQ).

It is found in the cell inner membrane. The catalysed reaction is L-methionine(out) + ATP + H2O = L-methionine(in) + ADP + phosphate + H(+). It carries out the reaction D-methionine(out) + ATP + H2O = D-methionine(in) + ADP + phosphate + H(+). Functionally, part of the ABC transporter complex MetNIQ involved in methionine import. Responsible for energy coupling to the transport system. The chain is Methionine import ATP-binding protein MetN from Shigella boydii serotype 4 (strain Sb227).